A 427-amino-acid chain; its full sequence is Trigger factor (427 aa).

The 86-residue stretch at 163–248 folds into the PPIase FKBP-type domain; it reads GDTVVIDFVG…IHEVKAKEVP (86 aa).

It belongs to the FKBP-type PPIase family. Tig subfamily.

It is found in the cytoplasm. The enzyme catalyses [protein]-peptidylproline (omega=180) = [protein]-peptidylproline (omega=0). In terms of biological role, involved in protein export. Acts as a chaperone by maintaining the newly synthesized protein in an open conformation. Functions as a peptidyl-prolyl cis-trans isomerase. This is Trigger factor from Streptococcus pneumoniae (strain CGSP14).